We begin with the raw amino-acid sequence, 685 residues long: Sorbicillinoid biosynthetic cluster transcription factor sor4 (685 aa).

Over residues 1-14 the composition is skewed to low complexity; it reads MGSSATATTTGEST. Residues 1 to 20 form a disordered region; that stretch reads MGSSATATTTGESTRQQPGL. The segment at residues 22–49 is a DNA-binding region (zn(2)-C6 fungal-type); the sequence is CEECRRRKARCDRVRPKCGICADSGRNC. Residues 81–112 are disordered; that stretch reads GQNDAPSLPQERDSLGCPTPSEKVSPEGDLVS.

The protein resides in the nucleus. In terms of biological role, transcription factor that acts as the main regulator of the gene cluster that mediates the biosynthesis of sorbicillinoids, a diverse group of yellow secondary metabolites that restrict growth of competing pathogenic fungi but not of bacteria. This chain is Sorbicillinoid biosynthetic cluster transcription factor sor4, found in Hypocrea jecorina (strain QM6a) (Trichoderma reesei).